Here is a 100-residue protein sequence, read N- to C-terminus: Integration host factor subunit alpha (100 aa).

Belongs to the bacterial histone-like protein family. In terms of assembly, heterodimer of an alpha and a beta chain.

This protein is one of the two subunits of integration host factor, a specific DNA-binding protein that functions in genetic recombination as well as in transcriptional and translational control. The protein is Integration host factor subunit alpha of Buchnera aphidicola subsp. Schizaphis graminum (strain Sg).